Here is a 27-residue protein sequence, read N- to C-terminus: Potassium channel toxin alpha-KTx 32.1 (27 aa).

2 disulfides stabilise this stretch: Cys5/Cys18 and Cys12/Cys25.

In terms of tissue distribution, expressed by the venom gland.

The protein resides in the secreted. Blocker of voltage-gated potassium channels. Inhibits voltage-gated potassium channels Kv1.2/KCNA2 (Kd=0.96 nM) and Kv1.3/KCNA3 (Kd=1.3 nM). Does not inhibit Kv1.1/KCNA1, Kv1.5/KCNA5, Kv11.1/KCNH2/ERG1, KCa1.1/KCNMA1, KCa3.1/KCNN4, NaV1.5/SCN5A, NaV1.4/SCN4A or HV1/HVCN1. Strongly inhibits the expression of the activation markers interleukin-2 receptor and CD40 ligand/CD40LG in anti-CD3-activated CD4(+) TEM lymphocytes. The sequence is that of Potassium channel toxin alpha-KTx 32.1 from Centruroides margaritatus (Central American bark Scorpion).